The chain runs to 434 residues: Glucose-6-phosphate 1-dehydrogenase (434 aa).

NADP(+) is bound by residues 7 to 14 (GSSGDLAK), Arg36, Tyr93, and Lys112. Residues Lys112, 137–141 (HYLLK), Glu175, and Asp193 contribute to the D-glucose 6-phosphate site. His198 (proton acceptor) is an active-site residue. D-glucose 6-phosphate contacts are provided by Lys280 and Lys285. Arg286 contributes to the NADP(+) binding site.

Belongs to the glucose-6-phosphate dehydrogenase family.

It carries out the reaction D-glucose 6-phosphate + NADP(+) = 6-phospho-D-glucono-1,5-lactone + NADPH + H(+). Its pathway is carbohydrate degradation; pentose phosphate pathway; D-ribulose 5-phosphate from D-glucose 6-phosphate (oxidative stage): step 1/3. Catalyzes the rate-limiting step of the oxidative pentose-phosphate pathway, which represents a route for the dissimilation of carbohydrates besides glycolysis. The main function of this enzyme is to provide reducing power (NADPH) and pentose phosphates for fatty acid and nucleic acid synthesis. The polypeptide is Glucose-6-phosphate 1-dehydrogenase (ZWF1) (Encephalitozoon cuniculi (strain GB-M1) (Microsporidian parasite)).